A 154-amino-acid polypeptide reads, in one-letter code: Probable cyclic pyranopterin monophosphate synthase (154 aa).

Substrate contacts are provided by residues 74–76 (LCH) and 110–111 (ME). Aspartate 125 is an active-site residue.

This sequence belongs to the MoaC family. Homohexamer; trimer of dimers.

It carries out the reaction (8S)-3',8-cyclo-7,8-dihydroguanosine 5'-triphosphate = cyclic pyranopterin phosphate + diphosphate. The protein operates within cofactor biosynthesis; molybdopterin biosynthesis. Its function is as follows. Catalyzes the conversion of (8S)-3',8-cyclo-7,8-dihydroguanosine 5'-triphosphate to cyclic pyranopterin monophosphate (cPMP). In Methanosphaerula palustris (strain ATCC BAA-1556 / DSM 19958 / E1-9c), this protein is Probable cyclic pyranopterin monophosphate synthase.